A 116-amino-acid chain; its full sequence is uncharacterized protein (116 aa).

One can recognise an RRM domain in the interval 6–83 (ATVHVGNLAP…RCIRVSPANF (78 aa)).

The protein resides in the cytoplasm. The protein localises to the nucleus. This is an uncharacterized protein from Schizosaccharomyces pombe (strain 972 / ATCC 24843) (Fission yeast).